A 505-amino-acid polypeptide reads, in one-letter code: Lysine--tRNA ligase (505 aa).

Glu415 and Glu422 together coordinate Mg(2+).

This sequence belongs to the class-II aminoacyl-tRNA synthetase family. Homodimer. It depends on Mg(2+) as a cofactor.

It localises to the cytoplasm. The catalysed reaction is tRNA(Lys) + L-lysine + ATP = L-lysyl-tRNA(Lys) + AMP + diphosphate. This chain is Lysine--tRNA ligase, found in Yersinia pseudotuberculosis serotype O:1b (strain IP 31758).